The primary structure comprises 62 residues: Small, acid-soluble spore protein A (62 aa).

Belongs to the alpha/beta-type SASP family.

SASP are bound to spore DNA. They are double-stranded DNA-binding proteins that cause DNA to change to an a-like conformation. They protect the DNA backbone from chemical and enzymatic cleavage and are thus involved in dormant spore's high resistance to UV light. The sequence is that of Small, acid-soluble spore protein A (sasP-A) from Priestia megaterium (Bacillus megaterium).